The following is a 408-amino-acid chain: Aurora kinase A-B (408 aa).

Residues 1 to 10 show a composition bias toward basic and acidic residues; that stretch reads MERAVKENHK. The segment at 1 to 128 is disordered; that stretch reads MERAVKENHK…QGKTLAVPKE (128 aa). A compositionally biased stretch (polar residues) spans 85–110; sequence GHQTSKPQGPNENRNPQQTSHSSTPN. In terms of domain architecture, Protein kinase spans 140–390; sequence FEIGRPLGKG…LKGVLEHPWI (251 aa). Residues Lys-150, Lys-169, and 217-220 each bind ATP; that span reads LDYA. Asp-263 (proton acceptor) is an active-site residue. Asp-281 serves as a coordination point for ATP. Positions 287–300 are activation segment; sequence HAPSSRRTTLCGTL.

Belongs to the protein kinase superfamily. Ser/Thr protein kinase family. Aurora subfamily. In terms of assembly, interacts with kif2c and kif11. Phosphorylated. Autophosphorylated on a serine residue.

It is found in the cytoplasm. It localises to the cytoskeleton. Its subcellular location is the spindle pole. The protein resides in the microtubule organizing center. The protein localises to the centrosome. It carries out the reaction L-seryl-[protein] + ATP = O-phospho-L-seryl-[protein] + ADP + H(+). The enzyme catalyses L-threonyl-[protein] + ATP = O-phospho-L-threonyl-[protein] + ADP + H(+). Functionally, mitotic serine/threonine kinases that contributes to the regulation of cell cycle progression. Associates with the centrosome and the spindle microtubules during mitosis and plays a critical role in various mitotic events including the establishment of mitotic spindle, centrosome duplication, centrosome separation as well as maturation, chromosomal alignment, spindle assembly checkpoint, and cytokinesis. Phosphorylates numerous target proteins. Important for microtubule formation and/or stabilization. The protein is Aurora kinase A-B (aurka-b) of Xenopus laevis (African clawed frog).